The sequence spans 107 residues: METLDKIKKQISENPILIYMKGSPKLPSCGFSARASEALMHCKVPFGYVDILQHPDIRAELPTYANWPTFPQLWVEGELIGGCDIILEMYQAGELQTLLAEVAAKHA.

The Glutaredoxin domain occupies 4–106 (LDKIKKQISE…TLLAEVAAKH (103 aa)). Lysine 21 contacts glutathione. A [2Fe-2S] cluster-binding site is contributed by cysteine 29. Glutathione contacts are provided by residues arginine 58, phenylalanine 70, and 83 to 84 (CD).

It belongs to the glutaredoxin family. Monothiol subfamily. In terms of assembly, homodimer.

The protein localises to the cytoplasm. Functionally, monothiol glutaredoxin involved in the biogenesis of iron-sulfur clusters. This is Glutaredoxin 4 (grxD) from Haemophilus influenzae (strain 86-028NP).